The chain runs to 276 residues: MAIHLYKTSTPSTRNGTVDSQVKSNPRNNLIYGQHRCGKGRNARGIITAGHRGGGHKRLYRKIDFRRTEKDIYGRIVTIEYDPNRNAYICLIHYGDGEKRYILHPRGALIGDTIVSGTEVPIKMGNALPLSATDMPLGTAIHNIEITLGKGGQLARAAGAVAKLIAKEGKSATLKLPSGEVRLISKNCSATVGQVGNVGVNQKSLGRAGSKRWLGKRPVVRGVVMNPVDHPHGGGEGRAPIGRKKPTTPWGYPALGRRSRKRNKYSDNLILRRRSK.

Disordered regions lie at residues 1–25 (MAIH…VKSN) and 225–276 (MNPV…RRSK). Residues 7–25 (KTSTPSTRNGTVDSQVKSN) are compositionally biased toward polar residues.

It belongs to the universal ribosomal protein uL2 family. In terms of assembly, part of the 50S ribosomal subunit.

The protein resides in the plastid. Its subcellular location is the chloroplast. This Coffea arabica (Arabian coffee) protein is Large ribosomal subunit protein uL2cy (rpl2-B).